The following is a 98-amino-acid chain: NADH-ubiquinone oxidoreductase chain 4L (98 aa).

The next 3 helical transmembrane spans lie at 1 to 21 (MSLVHINIFLAFTVSLVGLLM), 25 to 45 (HLMSSLLCLEGMMLSLFVMAT), and 59 to 81 (MPIILLVFAACERALGLSLLVMV).

The protein belongs to the complex I subunit 4L family. In terms of assembly, core subunit of respiratory chain NADH dehydrogenase (Complex I) which is composed of 45 different subunits.

The protein localises to the mitochondrion inner membrane. The catalysed reaction is a ubiquinone + NADH + 5 H(+)(in) = a ubiquinol + NAD(+) + 4 H(+)(out). Functionally, core subunit of the mitochondrial membrane respiratory chain NADH dehydrogenase (Complex I) which catalyzes electron transfer from NADH through the respiratory chain, using ubiquinone as an electron acceptor. Part of the enzyme membrane arm which is embedded in the lipid bilayer and involved in proton translocation. The sequence is that of NADH-ubiquinone oxidoreductase chain 4L (MT-ND4L) from Equus caballus (Horse).